We begin with the raw amino-acid sequence, 425 residues long: MLLTFAPIFLLISSIVAAPTLQLQRKGLEWDYQNDKIRGVNLGGWFVLEPYITPSLFSVWSNGEDDLNTPVDEYHYTQKLGKETALSRLEAHWSSWYTEADFAQMKYLGINAVRIPIGYWAFQLLDNDPYVQGQVKYLDQALEWCRNNGLYAWVDLHGAPGSQNGFDNSGLRDSYKFQDDDDVKVTLEVLKTIGAKYGGSDYEDVVIGIELLNEPLGPVLDMDGLRQFYQDGYSEIRNNDGVESYNAIIIHDAFQQTDHYWDNFMQVSGGYWNVVVDHHHYQVFDQAALELLIEDHIKTACNWGTTHKDEAHWNIVGEWSSALTDCAKWLNGVGHGARWSGNYDNCPYIDSCLSYTDLSGWTDEYKTNVRKYTEAQLDAWEQVGGWFFWCWKTESAPEWDFQALTNAGLIPQPLNDRQYPNQCGY.

Residues 1 to 17 (MLLTFAPIFLLISSIVA) form the signal peptide. Glu-214 acts as the Proton donor in catalysis. 2 cysteine pairs are disulfide-bonded: Cys-301/Cys-423 and Cys-326/Cys-352. Lys-328 serves as the catalytic Nucleophile.

The protein belongs to the glycosyl hydrolase 5 (cellulase A) family.

It localises to the secreted. The enzyme catalyses Successive hydrolysis of beta-D-glucose units from the non-reducing ends of (1-&gt;3)-beta-D-glucans, releasing alpha-glucose.. Its function is as follows. Beta-glucanases participate in the metabolism of beta-glucan, the main structural component of the cell wall. It could also function biosynthetically as a transglycosylase. The protein is Glucan 1,3-beta-glucosidase (EXG1) of Candida oleophila (Yeast).